We begin with the raw amino-acid sequence, 152 residues long: ESAT-6 secretion machinery protein EssA (152 aa).

At 1 to 114 (MLMNSVIALT…PYIQNKQEKK (114 aa)) the chain is on the cytoplasmic side. A disordered region spans residues 62–83 (ERQQQIKNDMFQNQASHSTRLN). Positions 66–80 (QIKNDMFQNQASHST) are enriched in polar residues. A helical membrane pass occupies residues 115–135 (IFPYILMSVGAFLTLGFVIFS). At 136–152 (IHKGRRTKNESARKSNI) the chain is on the extracellular side.

The protein belongs to the EssA family.

The protein resides in the cell membrane. Component of the ESAT-6 secretion system (Ess). Required for the secretion of EsxA and EsxB. This chain is ESAT-6 secretion machinery protein EssA, found in Staphylococcus aureus (strain COL).